Consider the following 390-residue polypeptide: Protein MalY (390 aa).

Residue lysine 233 is modified to N6-(pyridoxal phosphate)lysine.

This sequence belongs to the class-II pyridoxal-phosphate-dependent aminotransferase family. MalY/PatB cystathionine beta-lyase subfamily. As to quaternary structure, homodimer. Interacts with MalT. Pyridoxal 5'-phosphate is required as a cofactor.

It catalyses the reaction L,L-cystathionine + H2O = L-homocysteine + pyruvate + NH4(+). The catalysed reaction is an S-substituted L-cysteine + H2O = a thiol + pyruvate + NH4(+). Its function is as follows. Acts as a beta-cystathionase and as a repressor of the maltose regulon. This Escherichia coli (strain K12) protein is Protein MalY (malY).